The sequence spans 265 residues: UPF0026 protein slr1464 (265 aa).

In terms of domain architecture, Radical SAM core spans 16 to 252 (RYGRSLGIDP…QNLAKKISGA (237 aa)). [4Fe-4S] cluster-binding residues include cysteine 32, cysteine 36, and cysteine 39. The segment at 204–230 (RPTRPKPLQRELEGRGNHTGTPYGDRP) is disordered.

The protein belongs to the UPF0026 family. The cofactor is [4Fe-4S] cluster.

In Synechocystis sp. (strain ATCC 27184 / PCC 6803 / Kazusa), this protein is UPF0026 protein slr1464.